A 440-amino-acid polypeptide reads, in one-letter code: MSPAIKAPLLPNQEPSSSSSENHGSFAGAVFNISTSIVGAGIMAIPAAFKVLGVIPSLSIIVIIAWLSNVSAGFLMKSSLAGESTTYAGVMKESFGKSGAVAVTVVTMVVTFGSMIIFSIIIGDVISGNEKDGIIHLGLLQEWFGSHWWNTRFFGLLFIFVFLFLPLVLCRRVERLAFSSAISFLLALLFVVISSVLAIIALVQGKTKPPRLFPELNDGGLSFFSLFTASPVIVTAFTFHFNVHPVAFELKDPLNVLSATRISVILCATIYSATGLFCYLLFGDSTMTDVLMNFDQSTSSSVGSLLNDIVRLSYAIHLMLVFPLLNFSLRANLDELLFPMKLSLVEDNKRFFALTFPLLISCFLGAIAIPDIWYFFQFLGSTSTVSIAFIFPAAIVLRNVNGFSTLREKIVASVMLVLAVATSIIAISTNIYTFTATEET.

A run of 11 helical transmembrane segments spans residues phenylalanine 26–proline 46, alanine 47–leucine 67, alanine 102–isoleucine 122, tryptophan 149–leucine 169, isoleucine 182–leucine 202, glycine 219–phenylalanine 239, isoleucine 262–phenylalanine 282, isoleucine 309–leucine 329, phenylalanine 356–phenylalanine 376, glutamine 377–leucine 397, and isoleucine 410–asparagine 430.

The protein belongs to the amino acid/polyamine transporter 2 family. Amino acid/auxin permease (AAAP) (TC 2.A.18.6) subfamily.

It is found in the membrane. This is Amino acid transporter AVT6D from Arabidopsis thaliana (Mouse-ear cress).